The sequence spans 387 residues: Cytochrome b (387 aa).

The next 4 membrane-spanning stretches (helical) occupy residues 32-52, 76-98, 113-133, and 179-199; these read FGSLLACVLVVQIVTGILLAC, FLLRALHANGASFFFIFLYLHIG, TWNIGVIIFLLTIITAFLGYC, and FFSLHYLMPFVIAALSIMHLI. Histidine 82 and histidine 96 together coordinate heme b. Histidine 183 and histidine 197 together coordinate heme b. Histidine 202 is an a ubiquinone binding site. 4 consecutive transmembrane segments (helical) span residues 225–245, 289–309, 321–341, and 348–368; these read FLIKDLITIFIFLLAINYMVF, QLGVVAMLLSILVLLLLPLLD, MGKFFFWCFVADFCILAWIGG, and FITIGAYATAFYFIYFFILIP.

This sequence belongs to the cytochrome b family. As to quaternary structure, fungal cytochrome b-c1 complex contains 10 subunits; 3 respiratory subunits, 2 core proteins and 5 low-molecular weight proteins. Cytochrome b-c1 complex is a homodimer. It depends on heme b as a cofactor.

Its subcellular location is the mitochondrion inner membrane. Component of the ubiquinol-cytochrome c reductase complex (complex III or cytochrome b-c1 complex) that is part of the mitochondrial respiratory chain. The b-c1 complex mediates electron transfer from ubiquinol to cytochrome c. Contributes to the generation of a proton gradient across the mitochondrial membrane that is then used for ATP synthesis. This Schizosaccharomyces octosporus (Fission yeast) protein is Cytochrome b (cob).